The following is a 312-amino-acid chain: tRNA pseudouridine synthase B (312 aa).

Aspartate 37 functions as the Nucleophile in the catalytic mechanism.

It belongs to the pseudouridine synthase TruB family. Type 1 subfamily.

It catalyses the reaction uridine(55) in tRNA = pseudouridine(55) in tRNA. In terms of biological role, responsible for synthesis of pseudouridine from uracil-55 in the psi GC loop of transfer RNAs. The sequence is that of tRNA pseudouridine synthase B from Deinococcus geothermalis (strain DSM 11300 / CIP 105573 / AG-3a).